A 238-amino-acid chain; its full sequence is Ribonuclease-like storage protein (238 aa).

The N-terminal stretch at methionine 1–alanine 23 is a signal peptide. RNA is bound at residue glutamine 37. A disulfide bridge links cysteine 43 with cysteine 49. RNA is bound by residues histidine 61, phenylalanine 109, histidine 112 to glutamate 113, and lysine 116 to histidine 117. Histidine 61 (proton donor) is an active-site residue. Intrachain disulfides connect cysteine 76–cysteine 120 and cysteine 196–cysteine 207. Residue glutamate 113 is part of the active site. Histidine 117 functions as the Proton acceptor in the catalytic mechanism.

It belongs to the RNase T2 family. Homodimer. In terms of tissue distribution, root.

In terms of biological role, may act as a storage protein providing a nitrogen source. Seems to have no RNase activity although it has conserved the active site residues. In Panax ginseng (Korean ginseng), this protein is Ribonuclease-like storage protein.